The following is a 218-amino-acid chain: ATP phosphoribosyltransferase (218 aa).

It belongs to the ATP phosphoribosyltransferase family. Short subfamily. Heteromultimer composed of HisG and HisZ subunits.

It is found in the cytoplasm. The enzyme catalyses 1-(5-phospho-beta-D-ribosyl)-ATP + diphosphate = 5-phospho-alpha-D-ribose 1-diphosphate + ATP. It functions in the pathway amino-acid biosynthesis; L-histidine biosynthesis; L-histidine from 5-phospho-alpha-D-ribose 1-diphosphate: step 1/9. Its function is as follows. Catalyzes the condensation of ATP and 5-phosphoribose 1-diphosphate to form N'-(5'-phosphoribosyl)-ATP (PR-ATP). Has a crucial role in the pathway because the rate of histidine biosynthesis seems to be controlled primarily by regulation of HisG enzymatic activity. The polypeptide is ATP phosphoribosyltransferase (Trichormus variabilis (strain ATCC 29413 / PCC 7937) (Anabaena variabilis)).